The primary structure comprises 84 residues: Small ribosomal subunit protein uS17c (84 aa).

It belongs to the universal ribosomal protein uS17 family. Part of the 30S ribosomal subunit.

Its subcellular location is the plastid. It is found in the chloroplast. One of the primary rRNA binding proteins, it binds specifically to the 5'-end of 16S ribosomal RNA. The sequence is that of Small ribosomal subunit protein uS17c (rps17) from Thalassiosira pseudonana (Marine diatom).